A 154-amino-acid polypeptide reads, in one-letter code: 6,7-dimethyl-8-ribityllumazine synthase (154 aa).

Residues Phe-22, 56–58 (AFE), and 80–82 (AVI) contribute to the 5-amino-6-(D-ribitylamino)uracil site. 85-86 (AT) is a (2S)-2-hydroxy-3-oxobutyl phosphate binding site. The active-site Proton donor is His-88. Phe-113 contributes to the 5-amino-6-(D-ribitylamino)uracil binding site. A (2S)-2-hydroxy-3-oxobutyl phosphate-binding site is contributed by Arg-127.

This sequence belongs to the DMRL synthase family.

The catalysed reaction is (2S)-2-hydroxy-3-oxobutyl phosphate + 5-amino-6-(D-ribitylamino)uracil = 6,7-dimethyl-8-(1-D-ribityl)lumazine + phosphate + 2 H2O + H(+). The protein operates within cofactor biosynthesis; riboflavin biosynthesis; riboflavin from 2-hydroxy-3-oxobutyl phosphate and 5-amino-6-(D-ribitylamino)uracil: step 1/2. Functionally, catalyzes the formation of 6,7-dimethyl-8-ribityllumazine by condensation of 5-amino-6-(D-ribitylamino)uracil with 3,4-dihydroxy-2-butanone 4-phosphate. This is the penultimate step in the biosynthesis of riboflavin. The protein is 6,7-dimethyl-8-ribityllumazine synthase of Desulfitobacterium hafniense (strain DSM 10664 / DCB-2).